The sequence spans 136 residues: MDGEVKSYWFKTFSHKSFSVIWDLFYNTSNGVTKKTINSGTILNHLNEVGLAYWVMGDGSLHREGRVLTLHTQGFSHDENKMMSEELNLKFGFKSKVVKHKNKFVVQFTTSDANKLHDLIKPYLIPTMQYKLPRKL.

This sequence belongs to the LAGLIDADG endonuclease family.

The protein localises to the mitochondrion. In terms of biological role, mitochondrial DNA endonuclease involved in intron homing. In Mycosarcoma maydis (Corn smut fungus), this protein is Probable intron-encoded DNA endonuclease 3 (hegI3).